A 785-amino-acid chain; its full sequence is uncharacterized protein (785 aa).

Positions 53-65 are enriched in polar residues; it reads KNTLTGSHGSNDL. The tract at residues 53–162 is disordered; that stretch reads KNTLTGSHGS…RKAADEQGPI (110 aa). Positions 66–79 are enriched in acidic residues; the sequence is ATDESLDSPEDEEA. Residues 81–94 show a composition bias toward polar residues; sequence SPLQLGTPTSTTSG. Residue Ser215 is modified to Phosphoserine. Disordered regions lie at residues 571–590 and 631–657; these read KVVD…TSVN and DSSG…RIQF. A compositionally biased stretch (acidic residues) spans 575 to 584; it reads SDDEESDSDE. Ser667 bears the Phosphoserine mark. Residues 693–785 form a disordered region; it reads DPKMKFTSHP…FGSIFKKVFG (93 aa). Residues 725–739 are compositionally biased toward basic residues; sequence RKAHHHHHHHNHVSR. A compositionally biased stretch (low complexity) spans 776–785; that stretch reads FGSIFKKVFG.

This is an uncharacterized protein from Saccharomyces cerevisiae (strain ATCC 204508 / S288c) (Baker's yeast).